The primary structure comprises 113 residues: uncharacterized protein (113 aa).

An N-terminal signal peptide occupies residues Met-1 to Ala-16. Residues Gly-81–Asn-101 show a composition bias toward gly residues. The disordered stretch occupies residues Gly-81 to Gly-103.

As to expression, nacreous layer of shell (at protein level).

It is found in the secreted. This is an uncharacterized protein from Margaritifera margaritifera (Freshwater pearl mussel).